Here is a 168-residue protein sequence, read N- to C-terminus: Protein OPG162 (168 aa).

The Intravirion segment spans residues 1–14 (MKSLNRQTVSRFKK). The helical transmembrane segment at 15-37 (LSVPAAIMMILSTIISGIGTFLH) threads the bilayer. The Virion surface portion of the chain corresponds to 38–168 (YKEELMPSAC…SVLCVKRFYK (131 aa)). The C-type lectin domain occupies 54-163 (YDKHCYLDTN…CKSTQSVLCV (110 aa)). Cystine bridges form between cysteine 75/cysteine 162 and cysteine 141/cysteine 154. N-linked (GlcNAc...) asparagine; by host glycosylation occurs at asparagine 133.

Belongs to the orthopoxvirus OPG162 protein family. Interacts with protein OPG161. Interacts with protein OPG164. Interacts with protein OPG190.

The protein resides in the virion membrane. Its subcellular location is the host Golgi apparatus. Forms a complex with OPG162 and OPG190 to coordinate the incorporation of OPG164 into wrapped enveloped virion (EV) membranes and, subsequently, the production of actin tails. Therefore plays an essential role in efficient cell-to-cell spread of viral particles. The sequence is that of Protein OPG162 (OPG162) from Variola virus (isolate Human/India/Ind3/1967) (VARV).